Reading from the N-terminus, the 438-residue chain is Phospholipase D Y (438 aa).

The first 19 residues, 1-19 (MIINRLFIIIVLFFVNVNS), serve as a signal peptide directing secretion. N-linked (GlcNAc...) asparagine glycosylation occurs at asparagine 50. The PLD phosphodiesterase 1 domain maps to 145–172 (GSGVLHTKLIIIDESSAYVGSANADWSS). Active-site residues include histidine 150, lysine 152, and aspartate 157. Residues asparagine 223, asparagine 336, and asparagine 394 are each glycosylated (N-linked (GlcNAc...) asparagine). Residues 373–399 (YTRVNHAKFMVTEKQSYVGTSNWSQDY) form the PLD phosphodiesterase 2 domain.

It belongs to the phospholipase D family.

The enzyme catalyses a 1,2-diacyl-sn-glycero-3-phosphocholine + H2O = a 1,2-diacyl-sn-glycero-3-phosphate + choline + H(+). Inhibited by butan-1-ol. Hydrolyzes membrane phospholipids, such as PtdCho (phosphatidylcholine), producing the free headgroup and PtdOH (phosphatidic acid; signaling molecule on its own). This is Phospholipase D Y (pldY) from Dictyostelium discoideum (Social amoeba).